We begin with the raw amino-acid sequence, 470 residues long: 6-phospho-beta-galactosidase (470 aa).

Residues Gln19, His116, Asn159, Glu160, and Asn297 each contribute to the D-galactose 6-phosphate site. The active-site Proton donor is Glu160. Glu375 functions as the Nucleophile in the catalytic mechanism. Positions 430, 431, 437, and 439 each coordinate D-galactose 6-phosphate.

Belongs to the glycosyl hydrolase 1 family.

It carries out the reaction a 6-phospho-beta-D-galactoside + H2O = D-galactose 6-phosphate + an alcohol. Its pathway is carbohydrate metabolism; lactose degradation; D-galactose 6-phosphate and beta-D-glucose from lactose 6-phosphate: step 1/1. This chain is 6-phospho-beta-galactosidase, found in Staphylococcus aureus (strain MRSA252).